Here is a 60-residue protein sequence, read N- to C-terminus: Protein CADMIUM TOLERANCE 4 (60 aa).

Residues 26–42 (GFLYACLFMLCCCFCCY) traverse the membrane as a helical segment.

Belongs to the CYSTM1 family. Mainly expressed in shoots, and, to a lower extent, in roots.

It localises to the cell membrane. It is found in the secreted. The protein localises to the cell wall. Its function is as follows. Confers resistance to heavy metal ions (e.g. aluminium (Al)) by chelating them at the plasma membrane of root cells, thus stopping their entry and reducing their accumulation. The chain is Protein CADMIUM TOLERANCE 4 from Oryza sativa subsp. japonica (Rice).